The sequence spans 293 residues: MAQSTQHNDDALRVSVLSEALPYIQSFAGRRIVIKYGGAAMAHAELRSAVFRDLALLACVGVRPVVVHGGGPEINQWLQRLEIPAEFRDGLRVTDADTMDVVEMVLVGRVNKQIVNGLNQLGTRAVGLSGSDGSLVEARPWGNGSHGLVGDVARVNPDVLEPLLEKGYVPVISSVAATPDDGRAHNINADTVAGELAAALEAEKLILLTDTPGILEDRDDPDSLIRKLRLSEARQLIEDGVVAGGMTPKTECCIRALAQGVSAAHIIDGRVPHALLLEVFTDAGIGTMVVGRS.

Substrate is bound by residues 70 to 71 (GG), R92, and N186.

The protein belongs to the acetylglutamate kinase family. ArgB subfamily.

The protein resides in the cytoplasm. It carries out the reaction N-acetyl-L-glutamate + ATP = N-acetyl-L-glutamyl 5-phosphate + ADP. It participates in amino-acid biosynthesis; L-arginine biosynthesis; N(2)-acetyl-L-ornithine from L-glutamate: step 2/4. Its function is as follows. Catalyzes the ATP-dependent phosphorylation of N-acetyl-L-glutamate. The sequence is that of Acetylglutamate kinase from Synechococcus sp. (strain CC9605).